The chain runs to 423 residues: Gamma-glutamyl phosphate reductase (423 aa).

It belongs to the gamma-glutamyl phosphate reductase family.

The protein localises to the cytoplasm. It carries out the reaction L-glutamate 5-semialdehyde + phosphate + NADP(+) = L-glutamyl 5-phosphate + NADPH + H(+). Its pathway is amino-acid biosynthesis; L-proline biosynthesis; L-glutamate 5-semialdehyde from L-glutamate: step 2/2. Functionally, catalyzes the NADPH-dependent reduction of L-glutamate 5-phosphate into L-glutamate 5-semialdehyde and phosphate. The product spontaneously undergoes cyclization to form 1-pyrroline-5-carboxylate. The chain is Gamma-glutamyl phosphate reductase from Desulfovibrio desulfuricans (strain ATCC 27774 / DSM 6949 / MB).